Here is a 55-residue protein sequence, read N- to C-terminus: Small integral membrane protein 11 (55 aa).

Residues 9 to 29 (VPLLLYILAAKTLILCLAFAG) form a helical membrane-spanning segment. Positions 34 to 54 (QRRSLEGKLQAEKRKQSEKKA) form a coiled coil.

As to expression, expressed in brain, heart, kidney, thymus, liver, stomach, muscle, lung, testis, ovary, skin and eye.

Its subcellular location is the membrane. The sequence is that of Small integral membrane protein 11 from Mus musculus (Mouse).